The chain runs to 230 residues: uncharacterized protein (230 aa).

The first 22 residues, 1 to 22, serve as a signal peptide directing secretion; the sequence is MNIRSFLLISIFTAISYLVVDG. At 23–167 the chain is on the lumenal side; it reads ATPRTFAPSA…YTPYGGVKAL (145 aa). Residues 55–90 form a disordered region; that stretch reads SSSSSSSSISTSHDSQPSTSSSSPSSTSTSSSSGTS. Residues 168–188 form a helical membrane-spanning segment; that stretch reads IGILVGVVVGSVFLLAIVMVI. Topologically, residues 189 to 230 are cytoplasmic; it reads ARIWGPRLLANKDQNNNNEDLDSNLVSKDSEGTPQITYASNF. Residues 208-230 are disordered; the sequence is DLDSNLVSKDSEGTPQITYASNF.

Its subcellular location is the endoplasmic reticulum membrane. This is an uncharacterized protein from Schizosaccharomyces pombe (strain 972 / ATCC 24843) (Fission yeast).